The sequence spans 190 residues: Corticoliberin (190 aa).

The signal sequence occupies residues 1 to 24 (MRLRLLVSVGVLLVALLPSPPCRA). A propeptide spanning residues 25–147 (LLSRGPIPGA…QEAPAARKRR (123 aa)) is cleaved from the precursor. 2 disordered regions span residues 33–57 (GARQASQHPQPLSFFQPPPQPQEPQ) and 116–151 (RRPFDSPAGPAERGTENALGSRQEAPAARKRRSQEP). Ala-188 is modified (alanine amide).

It belongs to the sauvagine/corticotropin-releasing factor/urotensin I family. Interacts (via C-terminus) with CRFR1 (via N-terminal extracellular domain). As to expression, produced by the hypothalamus.

The protein localises to the secreted. Its function is as follows. Hormone regulating the release of corticotropin from pituitary gland. Induces NLRP6 in intestinal epithelial cells, hence may influence gut microbiota profile. This Bos taurus (Bovine) protein is Corticoliberin (CRH).